The sequence spans 1493 residues: ABC transporter C family member 7 (1493 aa).

10 consecutive transmembrane segments (helical) span residues 21-41 (FPMF…GSCV), 70-90 (VVIC…LSCF), 102-122 (LMIL…SFYI), 140-160 (VWWV…IALY), 165-185 (LVSV…LFLC), 309-329 (ILLS…APYL), 343-360 (YSNQ…AKLV), 423-443 (WYMH…LILY), 448-468 (LGSI…IPLA), and 535-555 (SVLW…CMLL). The region spanning 309–590 (ILLSTLFAFV…LPDTISMIVQ (282 aa)) is the ABC transmembrane type-1 1 domain. One can recognise an ABC transporter 1 domain in the interval 624–847 (VEVSNGAFSW…GTDFMELVGA (224 aa)). 659–666 (GTVGSGKS) is an ATP binding site. Residues 863–898 (ASAQSTTSKESKVSNDEEKQEEDLPSPKGQLVQEEE) are disordered. The residue at position 888 (S888) is a Phosphoserine. Transmembrane regions (helical) follow at residues 915–935 (LAYG…FQVL), 959–979 (GSTL…CILV), 1038–1055 (FSNL…IGVM), 1059–1081 (AWQV…QYYI), 1153–1173 (LSTV…EGVI), and 1177–1197 (FAGL…TLIW). An ABC transmembrane type-1 2 domain is found at 922 to 1204 (VPIILVVQIL…LIWTLCDLEN (283 aa)). The ABC transporter 2 domain maps to 1241 to 1475 (ITICNLQVRY…KSSSFSKLVA (235 aa)). 1275 to 1282 (GRTGCGKS) lines the ATP pocket.

The protein belongs to the ABC transporter superfamily. ABCC family. Conjugate transporter (TC 3.A.1.208) subfamily. In terms of tissue distribution, ubiquitous.

The protein localises to the membrane. The catalysed reaction is ATP + H2O + xenobioticSide 1 = ADP + phosphate + xenobioticSide 2.. In terms of biological role, pump for glutathione S-conjugates. In Arabidopsis thaliana (Mouse-ear cress), this protein is ABC transporter C family member 7 (ABCC7).